An 80-amino-acid chain; its full sequence is Protein FAM229B (80 aa).

Positions 1–45 (MPFRFGTQPRRFPVEGGDSSIELESGLSSSASCTGKETSPNRQLR) are disordered. Positions 15 to 32 (EGGDSSIELESGLSSSAS) are enriched in low complexity. Residues 33–42 (CTGKETSPNR) show a composition bias toward polar residues.

Belongs to the FAM229 family.

In Mus musculus (Mouse), this protein is Protein FAM229B (Fam229b).